A 346-amino-acid polypeptide reads, in one-letter code: Dihydroorotase (346 aa).

Zn(2+) contacts are provided by histidine 13 and histidine 15. Substrate is bound by residues 15–17 (HLR) and asparagine 41. 3 residues coordinate Zn(2+): lysine 99, histidine 136, and histidine 174. Residue lysine 99 is modified to N6-carboxylysine. Residue histidine 136 coordinates substrate. Position 219 (leucine 219) interacts with substrate. Aspartate 247 provides a ligand contact to Zn(2+). Residue aspartate 247 is part of the active site. Substrate-binding residues include histidine 251 and alanine 263.

This sequence belongs to the metallo-dependent hydrolases superfamily. DHOase family. Class II DHOase subfamily. As to quaternary structure, homodimer. Requires Zn(2+) as cofactor.

The enzyme catalyses (S)-dihydroorotate + H2O = N-carbamoyl-L-aspartate + H(+). The protein operates within pyrimidine metabolism; UMP biosynthesis via de novo pathway; (S)-dihydroorotate from bicarbonate: step 3/3. Catalyzes the reversible cyclization of carbamoyl aspartate to dihydroorotate. The protein is Dihydroorotase of Rhizobium leguminosarum bv. trifolii (strain WSM2304).